The following is a 266-amino-acid chain: Glucosamine-6-phosphate deaminase (266 aa).

Residue aspartate 72 is the Proton acceptor; for enolization step of the active site. Aspartate 141 functions as the For ring-opening step in the catalytic mechanism. The active-site Proton acceptor; for ring-opening step is histidine 143. Glutamate 148 acts as the For ring-opening step in catalysis.

This sequence belongs to the glucosamine/galactosamine-6-phosphate isomerase family. NagB subfamily. Homohexamer; trimer of disulfide-linked dimers.

The enzyme catalyses alpha-D-glucosamine 6-phosphate + H2O = beta-D-fructose 6-phosphate + NH4(+). Its pathway is amino-sugar metabolism; N-acetylneuraminate degradation; D-fructose 6-phosphate from N-acetylneuraminate: step 5/5. Its activity is regulated as follows. Allosterically activated by N-acetylglucosamine 6-phosphate (GlcNAc6P). Its function is as follows. Catalyzes the reversible isomerization-deamination of glucosamine 6-phosphate (GlcN6P) to form fructose 6-phosphate (Fru6P) and ammonium ion. This Shigella dysenteriae serotype 1 (strain Sd197) protein is Glucosamine-6-phosphate deaminase.